Reading from the N-terminus, the 371-residue chain is Alginate lyase (371 aa).

Positions 1–26 are cleaved as a signal peptide; that stretch reads MQSTDLKRLLIPSLLGLAIVTGSAQA. Residues 67 to 68, 140 to 141, and Tyr-258 each bind substrate; these read SK and HT.

The protein belongs to the polysaccharide lyase 5 family.

It localises to the periplasm. The enzyme catalyses Eliminative cleavage of alginate to give oligosaccharides with 4-deoxy-alpha-L-erythro-hex-4-enuronosyl groups at their non-reducing ends and beta-D-mannuronate at their reducing end.. Its function is as follows. Catalyzes the depolymerization of alginate by cleaving the beta-1,4 glycosidic bond between two adjacent sugar residues via a beta-elimination mechanism. May serve to degrade mislocalized alginate that is trapped in the periplasmic space. The chain is Alginate lyase from Pseudomonas fluorescens (strain ATCC BAA-477 / NRRL B-23932 / Pf-5).